Consider the following 119-residue polypeptide: Histone H1B, sperm (119 aa).

The H15 domain maps to 8–77 (THPPVATAVV…QNKGSFRVNK (70 aa)). Residues 76 to 119 (NKTALPKKKKAAKKPKAKKVKKPKSAAKKKTNRARAPKTKKNRN) are disordered. Positions 80–119 (LPKKKKAAKKPKAKKVKKPKSAAKKKTNRARAPKTKKNRN) are enriched in basic residues.

Belongs to the histone H1/H5 family.

It localises to the nucleus. Its subcellular location is the chromosome. Histones H1 are necessary for the condensation of nucleosome chains into higher-order structures. This chain is Histone H1B, sperm, found in Platynereis dumerilii (Dumeril's clam worm).